The sequence spans 1140 residues: uncharacterized protein (1140 aa).

Transmembrane regions (helical) follow at residues 8–28 (FLLFGFALGSFGWFVASSAFT) and 1098–1118 (IAITFTGSAALLSTIIASGVV).

The protein to M.pneumoniae MPN_375 (in the N-terminal section), M.pneumoniae MPN_374 (in the central section) and M.pneumoniae MPN_373 (in the C-terminal section).

Its subcellular location is the cell membrane. This is an uncharacterized protein from Mycoplasma pneumoniae (strain ATCC 29342 / M129 / Subtype 1) (Mycoplasmoides pneumoniae).